A 224-amino-acid polypeptide reads, in one-letter code: Germin-like protein 8-9 (224 aa).

The first 22 residues, 1–22 (MASPSFCLFAALLALVSWQAIA), serve as a signal peptide directing secretion. Cys-32 and Cys-47 are joined by a disulfide. The Cupin type-1 domain maps to 62–212 (AMLDTPRKTN…AFQVGKGTID (151 aa)). Asn-76 is a glycosylation site (N-linked (GlcNAc...) asparagine). His-109, His-111, and Glu-116 together coordinate Mn(2+). An N-linked (GlcNAc...) asparagine glycan is attached at Asn-135. His-157 contacts Mn(2+).

Belongs to the germin family. As to quaternary structure, oligomer (believed to be a pentamer but probably hexamer).

It is found in the secreted. Its subcellular location is the extracellular space. The protein resides in the apoplast. Functionally, plays a role in broad-spectrum disease resistance. Probably has no oxalate oxidase activity even if the active site is conserved. This is Germin-like protein 8-9 from Oryza sativa subsp. japonica (Rice).